We begin with the raw amino-acid sequence, 225 residues long: METCSPPVTFITYALYGIKTSPAWTLPNFEQVICSCDWGYRLIAVGAESKCDVTPQGSFVIQHGASITALVLDCGVEFCSYAFTHAENTRVPLTTEDGSVLVVPFCGWVCVGRDRCLRSMSGGVLTISWDTSQTAYISVAVYRPPTLQCHALDCTRAETTVCSTAAITDASESDPLYADQEGDQTQDQDGGHDFLETILMESDLYGTNGASALLEPCFPCLSNND.

The protein belongs to the alphaherpesvirinae HHV-1 UL4 family.

It is found in the host nucleus. The polypeptide is Nuclear protein UL4 homolog (Equus caballus (Horse)).